The sequence spans 259 residues: UPF0246 protein PputW619_0896 (259 aa).

It belongs to the UPF0246 family.

This is UPF0246 protein PputW619_0896 from Pseudomonas putida (strain W619).